Consider the following 262-residue polypeptide: Regulatory protein RecX (262 aa).

The protein belongs to the RecX family.

The protein localises to the cytoplasm. Its function is as follows. Modulates RecA activity. This Photobacterium profundum (strain SS9) protein is Regulatory protein RecX.